Reading from the N-terminus, the 329-residue chain is Acetoacetyl CoA synthase NphT7 (329 aa).

Residues Cys-115, His-256, and Asn-286 contribute to the active site.

Belongs to the thiolase-like superfamily. FabH family. Homodimer.

It localises to the cytoplasm. It catalyses the reaction malonyl-CoA + acetyl-CoA + H(+) = acetoacetyl-CoA + CO2 + CoA. Its pathway is metabolic intermediate biosynthesis; (R)-mevalonate biosynthesis. In terms of biological role, catalyzes the condensation of acetyl-CoA and malonyl-CoA to form acetoacetyl-CoA and CoA. Does not accept malonyl-[acyl-carrier-protein] as a substrate. Can also convert malonyl-CoA into acetyl-CoA via decarboxylation of malonyl-CoA. The sequence is that of Acetoacetyl CoA synthase NphT7 (nphT7) from Streptomyces sp. (strain CL190).